The following is a 461-amino-acid chain: Isthmin-1 (461 aa).

The signal sequence occupies residues 1–26 (MVRLAAELLLLLGLLLLTLHITVLRS). N-linked (GlcNAc...) asparagine glycosylation occurs at Asn-33. Residues 40–58 (QDSRVAENNVNADSSSSVQ) show a composition bias toward polar residues. 3 disordered regions span residues 40 to 62 (QDSR…LGPG), 73 to 92 (ASQP…RDGP), and 128 to 188 (EGSE…NFLK). Residues 131–141 (EPEKGMRKENK) are compositionally biased toward basic and acidic residues. The span at 156–165 (SSSSSSSSVS) shows a compositional bias: low complexity. The TSP type-1 domain maps to 215–259 (DGEGDWSAWSPCSVSCGNGNQKRTRSCGYACTATESRTCDMPSCP). 3 disulfide bridges follow: Cys-226–Cys-253, Cys-230–Cys-258, and Cys-241–Cys-245. Asn-282 carries N-linked (GlcNAc...) asparagine glycosylation. One can recognise an AMOP domain in the interval 286-449 (LFGVDTDSCE…QKCAENPQDE (164 aa)).

This sequence belongs to the isthmin family.

The protein resides in the secreted. Its function is as follows. May specifically influence certain angiogenesis process. In Danio rerio (Zebrafish), this protein is Isthmin-1 (ism1).